The sequence spans 228 residues: Interferon-induced transmembrane protein 10 (228 aa).

Residues 1–154 (MREGKRGPPC…PDTTEVNDYY (154 aa)) lie on the Extracellular side of the membrane. The tract at residues 29–49 (AQGPGQCPAPLGDPASTTDGA) is disordered. The helical transmembrane segment at 155 to 175 (LWSIFNFVYLNFCCLGFIALA) threads the bilayer. 2 S-palmitoyl cysteine lipidation sites follow: C167 and C168. Over 176–200 (YSLKVRDKKLLNDLNGAVEDAKTAR) the chain is Cytoplasmic. Residues 201-221 (LFNITSSALAASCIILVFIFL) form a helical membrane-spanning segment. Residues 222-228 (RYPLTDY) lie on the Extracellular side of the membrane.

This sequence belongs to the CD225/Dispanin family.

It is found in the cell membrane. The chain is Interferon-induced transmembrane protein 10 (IFITM10) from Homo sapiens (Human).